Here is a 214-residue protein sequence, read N- to C-terminus: Alkaline phosphatase-like protein (214 aa).

The next 3 helical transmembrane spans lie at 48-68 (LGIIGMIIAATIGSVLGALIL), 141-161 (FLILTTLGTLIWNIVLVCLGA), and 177-197 (YSSVVVVILGIIFILAILIFV).

The protein belongs to the DedA family.

Its subcellular location is the cell membrane. This is Alkaline phosphatase-like protein (apl) from Lactococcus lactis subsp. lactis (strain IL1403) (Streptococcus lactis).